Here is a 441-residue protein sequence, read N- to C-terminus: MSYTPGHHAGSRSSSGNRSGILKKTSWVDQSERSHQTYNRGRKPQPKFTVSTQPQGNPIPHYSWFSGITQFQKGRDFKFPDGQGVPIAYGIPPSEAKGYWYKHNRRSFKTADGQQKQLLPRWYFYYLGTGPYASSSYGDAHEGIFWVASHQADTSIPSDVSARDPTIQEAIPTRFSPGTILPQGYYVEGSGRSASNSRPGSRSQSRGPNNRSLSRSNSNFRHSDSIVKPDMADEIASLVLAKLGKDSKPQQVTKQNAKEIRHKILMKPRQKRTPNKFCNVQQCFGKRGPLQNFGNSEMLKLGTNDPQFPILAELAPTPGAFFFGSKLELFKRDSDADSPSKDTFELRYSGSIRFDSTLPGFETIMKVLKENLDAYVNSNQNTVSGSLSPKPQRKRGVKQSPESFDSLNLSADTQHISNDFTPEDHSLLATLDDPYVEDSVA.

The disordered stretch occupies residues 1-56 (MSYTPGHHAGSRSSSGNRSGILKKTSWVDQSERSHQTYNRGRKPQPKFTVSTQPQG). The span at 11–20 (SRSSSGNRSG) shows a compositional bias: low complexity. The interval 53 to 193 (QPQGNPIPHY…GYYVEGSGRS (141 aa)) is RNA-binding. One can recognise a CoV N NTD domain in the interval 60–189 (PHYSWFSGIT…ILPQGYYVEG (130 aa)). RNA contacts are provided by Arg-105 and Arg-121. The residue at position 158 (Ser-158) is a Phosphoserine; by host. Arg-163 serves as a coordination point for RNA. Thr-173 carries the post-translational modification Phosphothreonine; by host. A disordered region spans residues 186–226 (YVEGSGRSASNSRPGSRSQSRGPNNRSLSRSNSNFRHSDSI). Positions 189 to 220 (GSGRSASNSRPGSRSQSRGPNNRSLSRSNSNF) are enriched in low complexity. Ser-190 carries the post-translational modification Phosphoserine; by host. Residues 257-379 (AKEIRHKILM…ENLDAYVNSN (123 aa)) enclose the CoV N CTD domain. The segment at 264 to 382 (ILMKPRQKRT…DAYVNSNQNT (119 aa)) is dimerization. Polar residues predominate over residues 380–389 (QNTVSGSLSP). The interval 380 to 408 (QNTVSGSLSPKPQRKRGVKQSPESFDSLN) is disordered. Residues Ser-388 and Ser-417 each carry the phosphoserine; by host modification. A Phosphothreonine; by host modification is found at Thr-421.

The protein belongs to the betacoronavirus nucleocapsid protein family. As to quaternary structure, homooligomer. Both monomeric and oligomeric forms interact with RNA. Interacts with protein M. Interacts with NSP3; this interaction serves to tether the genome to the newly translated replicase-transcriptase complex at a very early stage of infection. Post-translationally, ADP-ribosylated. The ADP-ribosylation is retained in the virion during infection. In terms of processing, phosphorylated on serine and threonine residues.

It is found in the virion. The protein localises to the host endoplasmic reticulum-Golgi intermediate compartment. It localises to the host Golgi apparatus. Its function is as follows. Packages the positive strand viral genome RNA into a helical ribonucleocapsid (RNP) and plays a fundamental role during virion assembly through its interactions with the viral genome and membrane protein M. Plays an important role in enhancing the efficiency of subgenomic viral RNA transcription as well as viral replication. This is Nucleoprotein from Homo sapiens (Human).